The chain runs to 71 residues: DNA gyrase inhibitor YacG (71 aa).

The Zn(2+) site is built by Cys-8, Cys-11, Cys-27, and Cys-31. Positions 48 to 71 (VVEDDDLPPDAPGGESGGASGRLN) are disordered. Residues 61-71 (GESGGASGRLN) are compositionally biased toward gly residues.

Belongs to the DNA gyrase inhibitor YacG family. As to quaternary structure, interacts with GyrB. The cofactor is Zn(2+).

Its function is as follows. Inhibits all the catalytic activities of DNA gyrase by preventing its interaction with DNA. Acts by binding directly to the C-terminal domain of GyrB, which probably disrupts DNA binding by the gyrase. This is DNA gyrase inhibitor YacG from Ralstonia nicotianae (strain ATCC BAA-1114 / GMI1000) (Ralstonia solanacearum).